Here is a 475-residue protein sequence, read N- to C-terminus: UDP-N-acetylmuramate--L-alanine ligase (475 aa).

An ATP-binding site is contributed by 114 to 120 (GTHGKTT).

Belongs to the MurCDEF family.

The protein localises to the cytoplasm. The catalysed reaction is UDP-N-acetyl-alpha-D-muramate + L-alanine + ATP = UDP-N-acetyl-alpha-D-muramoyl-L-alanine + ADP + phosphate + H(+). It functions in the pathway cell wall biogenesis; peptidoglycan biosynthesis. Cell wall formation. In Bartonella tribocorum (strain CIP 105476 / IBS 506), this protein is UDP-N-acetylmuramate--L-alanine ligase.